A 312-amino-acid chain; its full sequence is tRNA dimethylallyltransferase (312 aa).

Residue 14–21 (GPTASGKS) coordinates ATP. 16–21 (TASGKS) provides a ligand contact to substrate. Interaction with substrate tRNA stretches follow at residues 39-42 (DSSL) and 163-167 (QRLQR).

Belongs to the IPP transferase family. As to quaternary structure, monomer. It depends on Mg(2+) as a cofactor.

It carries out the reaction adenosine(37) in tRNA + dimethylallyl diphosphate = N(6)-dimethylallyladenosine(37) in tRNA + diphosphate. Its function is as follows. Catalyzes the transfer of a dimethylallyl group onto the adenine at position 37 in tRNAs that read codons beginning with uridine, leading to the formation of N6-(dimethylallyl)adenosine (i(6)A). In Methylococcus capsulatus (strain ATCC 33009 / NCIMB 11132 / Bath), this protein is tRNA dimethylallyltransferase.